Reading from the N-terminus, the 443-residue chain is ATP-dependent protease ATPase subunit HslU (443 aa).

ATP-binding positions include Ile18 and 60-65 (GVGKTE). The disordered stretch occupies residues 142 to 162 (LGFEASPSEESNATRQKFRKK). The ATP site is built by Asp256, Glu321, and Arg393.

This sequence belongs to the ClpX chaperone family. HslU subfamily. In terms of assembly, a double ring-shaped homohexamer of HslV is capped on each side by a ring-shaped HslU homohexamer. The assembly of the HslU/HslV complex is dependent on binding of ATP.

The protein resides in the cytoplasm. Its function is as follows. ATPase subunit of a proteasome-like degradation complex; this subunit has chaperone activity. The binding of ATP and its subsequent hydrolysis by HslU are essential for unfolding of protein substrates subsequently hydrolyzed by HslV. HslU recognizes the N-terminal part of its protein substrates and unfolds these before they are guided to HslV for hydrolysis. The polypeptide is ATP-dependent protease ATPase subunit HslU (Nitrosomonas europaea (strain ATCC 19718 / CIP 103999 / KCTC 2705 / NBRC 14298)).